Here is a 414-residue protein sequence, read N- to C-terminus: Secernin-1 (414 aa).

A2 bears the N-acetylalanine mark. C9 is a catalytic residue.

The protein belongs to the peptidase C69 family. Secernin subfamily.

The protein localises to the cytoplasm. Regulates exocytosis in mast cells. Increases both the extent of secretion and the sensitivity of mast cells to stimulation with calcium. The protein is Secernin-1 (SCRN1) of Bos taurus (Bovine).